The sequence spans 508 residues: Photosystem II CP47 reaction center protein (508 aa).

Transmembrane regions (helical) follow at residues 21-36 (SVHIMHTALVSGWAGS), 101-115 (IVFSGLCFLAAIWHW), 140-156 (GIHLFLAGVACFGFGAF), 203-218 (IAAGTLGILAGLFHLS), 237-252 (VLSSSIAAVFFAAFVV), and 457-472 (TFALLFFFGHIWHGAR).

Belongs to the PsbB/PsbC family. PsbB subfamily. As to quaternary structure, PSII is composed of 1 copy each of membrane proteins PsbA, PsbB, PsbC, PsbD, PsbE, PsbF, PsbH, PsbI, PsbJ, PsbK, PsbL, PsbM, PsbT, PsbX, PsbY, PsbZ, Psb30/Ycf12, at least 3 peripheral proteins of the oxygen-evolving complex and a large number of cofactors. It forms dimeric complexes. The cofactor is Binds multiple chlorophylls. PSII binds additional chlorophylls, carotenoids and specific lipids..

It is found in the plastid. It localises to the chloroplast thylakoid membrane. Its function is as follows. One of the components of the core complex of photosystem II (PSII). It binds chlorophyll and helps catalyze the primary light-induced photochemical processes of PSII. PSII is a light-driven water:plastoquinone oxidoreductase, using light energy to abstract electrons from H(2)O, generating O(2) and a proton gradient subsequently used for ATP formation. The polypeptide is Photosystem II CP47 reaction center protein (Oryza sativa subsp. indica (Rice)).